The sequence spans 624 residues: Mannosyl-oligosaccharide 1,2-alpha-mannosidase MNS3 (624 aa).

Residues Met-1–Ser-43 lie on the Cytoplasmic side of the membrane. A helical; Signal-anchor for type II membrane protein membrane pass occupies residues Cys-44 to Met-64. The Lumenal portion of the chain corresponds to Ser-65–Thr-624. N-linked (GlcNAc...) asparagine glycosylation is found at Asn-69 and Asn-114. The segment at Leu-91–Pro-123 is disordered. Positions Gly-110–Ser-121 are enriched in low complexity. The Proton donor role is filled by Glu-212. Asn-236 is a glycosylation site (N-linked (GlcNAc...) asparagine). Asp-357 is an active-site residue. Asn-377 carries N-linked (GlcNAc...) asparagine glycosylation. A disulfide bridge links Cys-428 with Cys-471. Catalysis depends on Glu-485, which acts as the Proton donor. Asn-503 carries N-linked (GlcNAc...) asparagine glycosylation. The active site involves Glu-526. Residue Thr-613 coordinates Ca(2+).

The protein belongs to the glycosyl hydrolase 47 family. Ca(2+) is required as a cofactor. It depends on Mn(2+) as a cofactor. Mg(2+) serves as cofactor. As to expression, expressed in flowers, siliques, stems, leaves, roots, stamens and sepals.

It localises to the golgi apparatus. The protein resides in the cis-Golgi network membrane. It catalyses the reaction N(4)-(alpha-D-Man-(1-&gt;2)-alpha-D-Man-(1-&gt;2)-alpha-D-Man-(1-&gt;3)-[alpha-D-Man-(1-&gt;2)-alpha-D-Man-(1-&gt;3)-[alpha-D-Man-(1-&gt;2)-alpha-D-Man-(1-&gt;6)]-alpha-D-Man-(1-&gt;6)]-beta-D-Man-(1-&gt;4)-beta-D-GlcNAc-(1-&gt;4)-beta-D-GlcNAc)-L-asparaginyl-[protein] (N-glucan mannose isomer 9A1,2,3B1,2,3) + 4 H2O = N(4)-(alpha-D-Man-(1-&gt;3)-[alpha-D-Man-(1-&gt;3)-[alpha-D-Man-(1-&gt;6)]-alpha-D-Man-(1-&gt;6)]-beta-D-Man-(1-&gt;4)-beta-D-GlcNAc-(1-&gt;4)-beta-D-GlcNAc)-L-asparaginyl-[protein] (N-glucan mannose isomer 5A1,2) + 4 beta-D-mannose. The catalysed reaction is N(4)-(alpha-D-Man-(1-&gt;2)-alpha-D-Man-(1-&gt;2)-alpha-D-Man-(1-&gt;3)-[alpha-D-Man-(1-&gt;3)-[alpha-D-Man-(1-&gt;2)-alpha-D-Man-(1-&gt;6)]-alpha-D-Man-(1-&gt;6)]-beta-D-Man-(1-&gt;4)-beta-D-GlcNAc-(1-&gt;4)-beta-D-GlcNAc)-L-asparaginyl-[protein] (N-glucan mannose isomer 8A1,2,3B1,3) + 3 H2O = N(4)-(alpha-D-Man-(1-&gt;3)-[alpha-D-Man-(1-&gt;3)-[alpha-D-Man-(1-&gt;6)]-alpha-D-Man-(1-&gt;6)]-beta-D-Man-(1-&gt;4)-beta-D-GlcNAc-(1-&gt;4)-beta-D-GlcNAc)-L-asparaginyl-[protein] (N-glucan mannose isomer 5A1,2) + 3 beta-D-mannose. The enzyme catalyses N(4)-(alpha-D-Man-(1-&gt;2)-alpha-D-Man-(1-&gt;2)-alpha-D-Man-(1-&gt;3)-[alpha-D-Man-(1-&gt;2)-alpha-D-Man-(1-&gt;3)-[alpha-D-Man-(1-&gt;2)-alpha-D-Man-(1-&gt;6)]-alpha-D-Man-(1-&gt;6)]-beta-D-Man-(1-&gt;4)-beta-D-GlcNAc-(1-&gt;4)-beta-D-GlcNAc)-L-asparaginyl-[protein] (N-glucan mannose isomer 9A1,2,3B1,2,3) + H2O = N(4)-(alpha-D-Man-(1-&gt;2)-alpha-D-Man-(1-&gt;2)-alpha-D-Man-(1-&gt;3)-[alpha-D-Man-(1-&gt;3)-[alpha-D-Man-(1-&gt;2)-alpha-D-Man-(1-&gt;6)]-alpha-D-Man-(1-&gt;6)]-beta-D-Man-(1-&gt;4)-beta-D-GlcNAc-(1-&gt;4)-beta-D-GlcNAc)-L-asparaginyl-[protein] (N-glucan mannose isomer 8A1,2,3B1,3) + beta-D-mannose. It functions in the pathway protein modification; protein glycosylation. Its activity is regulated as follows. Inhibited by kifunensine and 1-deoxymannojirimycin, but not by swainsonine. Class I alpha-mannosidase essential for early N-glycan processing. Removes preferentially alpha-1,2-linked mannose residues from Man(9)GlcNAc(2) to produce Man(8)GlcNAc(2). Involved in root development and cell wall biosynthesis. This Arabidopsis thaliana (Mouse-ear cress) protein is Mannosyl-oligosaccharide 1,2-alpha-mannosidase MNS3 (MNS3).